The primary structure comprises 944 residues: DNA ligase 4 (944 aa).

Residues Glu-280, Lys-282, Arg-287, Glu-340, Phe-382, Glu-442, Lys-447, Lys-464, and Lys-466 each coordinate ATP. Lys-282 acts as the N6-AMP-lysine intermediate in catalysis. Glu-340 provides a ligand contact to Mg(2+). Residue Glu-442 coordinates Mg(2+). 2 consecutive BRCT domains span residues 681-780 (PISN…PNYC) and 836-941 (FPLF…DFPV).

It belongs to the ATP-dependent DNA ligase family. Component of the DNA ligase IV complex, composed of DNL4, LIF1 and NEJ1. Interacts (via BRCT domain) with LIF1. Interacts with NEJ1. Interacts with POL4 in the DNL4-LIF1 complex. It depends on Mg(2+) as a cofactor.

It localises to the nucleus. The enzyme catalyses ATP + (deoxyribonucleotide)n-3'-hydroxyl + 5'-phospho-(deoxyribonucleotide)m = (deoxyribonucleotide)n+m + AMP + diphosphate.. In terms of biological role, DNA ligase involved in DNA non-homologous end joining (NHEJ); required for double-strand break (DSB) repair. This chain is DNA ligase 4 (DNL4), found in Saccharomyces cerevisiae (strain ATCC 204508 / S288c) (Baker's yeast).